Consider the following 400-residue polypeptide: Elongation factor Tu-B (400 aa).

One can recognise a tr-type G domain in the interval 10–209 (KPHVNVGTIG…VVDEYIPTPE (200 aa)). A G1 region spans residues 19 to 26 (GHVDHGKT). GTP is bound at residue 19 to 26 (GHVDHGKT). Residue threonine 26 participates in Mg(2+) binding. The segment at 60–64 (GITIN) is G2. A G3 region spans residues 81-84 (DCPG). GTP is bound by residues 81-85 (DCPGH) and 136-139 (NKAD). A G4 region spans residues 136–139 (NKAD). Residues 174-176 (SAL) are G5.

The protein belongs to the TRAFAC class translation factor GTPase superfamily. Classic translation factor GTPase family. EF-Tu/EF-1A subfamily. Monomer.

It localises to the cytoplasm. The enzyme catalyses GTP + H2O = GDP + phosphate + H(+). In terms of biological role, GTP hydrolase that promotes the GTP-dependent binding of aminoacyl-tRNA to the A-site of ribosomes during protein biosynthesis. This chain is Elongation factor Tu-B, found in Caldanaerobacter subterraneus subsp. tengcongensis (strain DSM 15242 / JCM 11007 / NBRC 100824 / MB4) (Thermoanaerobacter tengcongensis).